We begin with the raw amino-acid sequence, 161 residues long: Regulator of ribonuclease activity A (161 aa).

This sequence belongs to the RraA family. Homotrimer. Binds to both RNA-binding sites in the C-terminal region of Rne and to RhlB.

Its subcellular location is the cytoplasm. Its function is as follows. Globally modulates RNA abundance by binding to RNase E (Rne) and regulating its endonucleolytic activity. Can modulate Rne action in a substrate-dependent manner by altering the composition of the degradosome. Modulates RNA-binding and helicase activities of the degradosome. This Alteromonas mediterranea (strain DSM 17117 / CIP 110805 / LMG 28347 / Deep ecotype) protein is Regulator of ribonuclease activity A.